Reading from the N-terminus, the 523-residue chain is Endoglucanase 19 (523 aa).

Residues 1–52 form the signal peptide; it reads MCSWSLSSHTLTSPVRQAAMEPKSSSCGGAGIRLRLLVVLHLLLLVPSSAMA. The active-site Nucleophile is the Asp-107. The N-linked (GlcNAc...) asparagine glycan is linked to Asn-279. Active-site residues include His-442, Asp-493, and Glu-502.

Belongs to the glycosyl hydrolase 9 (cellulase E) family.

The protein localises to the secreted. It carries out the reaction Endohydrolysis of (1-&gt;4)-beta-D-glucosidic linkages in cellulose, lichenin and cereal beta-D-glucans.. In Oryza sativa subsp. japonica (Rice), this protein is Endoglucanase 19.